The primary structure comprises 353 residues: Phosphate acyltransferase (353 aa).

The protein belongs to the PlsX family. In terms of assembly, homodimer. Probably interacts with PlsY.

Its subcellular location is the cytoplasm. It carries out the reaction a fatty acyl-[ACP] + phosphate = an acyl phosphate + holo-[ACP]. It participates in lipid metabolism; phospholipid metabolism. Functionally, catalyzes the reversible formation of acyl-phosphate (acyl-PO(4)) from acyl-[acyl-carrier-protein] (acyl-ACP). This enzyme utilizes acyl-ACP as fatty acyl donor, but not acyl-CoA. This Nitrosospira multiformis (strain ATCC 25196 / NCIMB 11849 / C 71) protein is Phosphate acyltransferase.